A 510-amino-acid polypeptide reads, in one-letter code: Putative cytochrome P450 cyp-13B1 (510 aa).

Heme is bound at residue cysteine 456.

The protein belongs to the cytochrome P450 family. Requires heme as cofactor.

In terms of biological role, cytochromes P450 are a group of heme-thiolate monooxygenases. They oxidize a variety of structurally unrelated compounds, including steroids, fatty acids, and xenobiotics. May play a role in the regulation of lifespan. The chain is Putative cytochrome P450 cyp-13B1 from Caenorhabditis elegans.